The chain runs to 161 residues: Putative pre-16S rRNA nuclease (161 aa).

The segment at 142-161 (AGSPPGALVPRNRVDPDRHA) is disordered.

Belongs to the YqgF nuclease family.

Its subcellular location is the cytoplasm. Its function is as follows. Could be a nuclease involved in processing of the 5'-end of pre-16S rRNA. The polypeptide is Putative pre-16S rRNA nuclease (Clavibacter sepedonicus (Clavibacter michiganensis subsp. sepedonicus)).